We begin with the raw amino-acid sequence, 89 residues long: Small ribosomal subunit protein uS15 (89 aa).

This sequence belongs to the universal ribosomal protein uS15 family. In terms of assembly, part of the 30S ribosomal subunit. Forms a bridge to the 50S subunit in the 70S ribosome, contacting the 23S rRNA.

Functionally, one of the primary rRNA binding proteins, it binds directly to 16S rRNA where it helps nucleate assembly of the platform of the 30S subunit by binding and bridging several RNA helices of the 16S rRNA. Its function is as follows. Forms an intersubunit bridge (bridge B4) with the 23S rRNA of the 50S subunit in the ribosome. This chain is Small ribosomal subunit protein uS15, found in Oceanobacillus iheyensis (strain DSM 14371 / CIP 107618 / JCM 11309 / KCTC 3954 / HTE831).